We begin with the raw amino-acid sequence, 283 residues long: Ribosomal RNA small subunit methyltransferase H (283 aa).

S-adenosyl-L-methionine contacts are provided by residues 31 to 33 (GGH), Asp50, Phe77, Asp93, and Gln100.

The protein belongs to the methyltransferase superfamily. RsmH family.

The protein localises to the cytoplasm. The catalysed reaction is cytidine(1402) in 16S rRNA + S-adenosyl-L-methionine = N(4)-methylcytidine(1402) in 16S rRNA + S-adenosyl-L-homocysteine + H(+). Its function is as follows. Specifically methylates the N4 position of cytidine in position 1402 (C1402) of 16S rRNA. The chain is Ribosomal RNA small subunit methyltransferase H from Trichodesmium erythraeum (strain IMS101).